The primary structure comprises 463 residues: Protein translocase subunit SecY (463 aa).

Residues 1-20 lie on the Cytoplasmic side of the membrane; sequence MGFMDFLAKMGENLPAVSKP. Residues 21-47 traverse the membrane as a helical segment; it reads KDKPTLTRKLLWTFIGLIVYLLMASIP. The Extracellular segment spans residues 48–60; sequence LYGVTSSNSFLSN. The segment at residues 61 to 68 is an intramembrane region (helical); it reads FLAQQIIF. The chain crosses the membrane as a discontinuously helical span at residues 61–89; sequence FLAQQIIFASSQGTLAQLGIGPVITSGLI. An intramembrane segment occupies 69 to 80; that stretch reads ASSQGTLAQLGI. The helical intramembrane region spans 81 to 89; sequence GPVITSGLI. The Cytoplasmic segment spans residues 90–110; that stretch reads MQILVGSKLINVDLTTQEGKS. The helical transmembrane segment at 111–134 threads the bilayer; that stretch reads KFTQAEKALALIFIIVESSLFGYV. At 135–142 the chain is on the extracellular side; the sequence is FTRATSNI. A helical membrane pass occupies residues 143 to 167; the sequence is LLPIIVVVQLIIASYIILLLDEMIQ. Residues 168–174 are Cytoplasmic-facing; sequence KGWGLGS. Residues 175–193 form a helical membrane-spanning segment; it reads GVSLFIMAGIMKVIFWNMF. The Extracellular segment spans residues 194–236; it reads GIVSVQSQNLPVGFFPLLVSYITSGRNLQEIVLNTSSTTPYQP. A helical transmembrane segment spans residues 237–258; sequence DLIGLIATVGLTILIVYLVNTN. The Cytoplasmic portion of the chain corresponds to 259 to 283; it reads IYIPVTTQRLRGIRTTVPLNFLYVS. The helical transmembrane segment at 284 to 305 threads the bilayer; that stretch reads SIPVIFVSVLGADIQLFASLAN. At 306-341 the chain is on the extracellular side; sequence SISNSASGILTDIANAFFFPPQGVPHSVYALVVDPV. Residues 342–361 form a helical membrane-spanning segment; sequence GAAIYAAVFIVLSIVFGMLW. Over 362–404 the chain is Cytoplasmic; it reads IDVAGLDPKTQAEQMIRSGIEIPGMRTNPRIIEGILSKYIYAL. Residues 405-423 form a helical membrane-spanning segment; it reads GFFSSLIVGLIAVVATFLG. The Extracellular segment spans residues 424–426; it reads TYG. Residues 427-441 form a helical membrane-spanning segment; sequence TGVGLLLAITIAMQY. The Cytoplasmic portion of the chain corresponds to 442 to 463; the sequence is YNLLAYERTLEMYPLLKRIVGE.

It belongs to the SecY/SEC61-alpha family. In terms of assembly, component of the Sec protein translocase complex. Heterotrimer consisting of alpha (SecY), beta (SecG) and gamma (SecE) subunits. The heterotrimers can form oligomers, although 1 heterotrimer is thought to be able to translocate proteins. Interacts with the ribosome. May interact with SecDF, and other proteins may be involved.

It localises to the cell membrane. In terms of biological role, the central subunit of the protein translocation channel SecYEG. Consists of two halves formed by TMs 1-5 and 6-10. These two domains form a lateral gate at the front which open onto the bilayer between TMs 2 and 7, and are clamped together by SecE at the back. The channel is closed by both a pore ring composed of hydrophobic SecY resides and a short helix (helix 2A) on the extracellular side of the membrane which forms a plug. The plug probably moves laterally to allow the channel to open. The ring and the pore may move independently. The protein is Protein translocase subunit SecY of Sulfolobus acidocaldarius (strain ATCC 33909 / DSM 639 / JCM 8929 / NBRC 15157 / NCIMB 11770).